Consider the following 440-residue polypeptide: Beta-1,3-galactosyl-O-glycosyl-glycoprotein beta-1,6-N-acetylglucosaminyltransferase (440 aa).

Residues 1–9 (MKMAGWKKK) are Cytoplasmic-facing. The chain crosses the membrane as a helical; Signal-anchor for type II membrane protein span at residues 10–30 (LCPGHHLWALGCYMLLAVVSL). At 31-440 (RLSLRFKCDV…RHKAIYGTEL (410 aa)) the chain is on the lumenal side. N-linked (GlcNAc...) asparagine; by host glycosylation is found at Asn-72 and Asn-108. 4 disulfides stabilise this stretch: Cys-73/Cys-230, Cys-164/Cys-384, Cys-185/Cys-212, and Cys-393/Cys-425.

Belongs to the glycosyltransferase 14 family.

The protein localises to the host Golgi apparatus membrane. It catalyses the reaction a 3-O-[beta-D-galactosyl-(1-&gt;3)-N-acetyl-alpha-D-galactosaminyl]-L-seryl-[protein] + UDP-N-acetyl-alpha-D-glucosamine = 3-O-{beta-D-galactosyl-(1-&gt;3)-[N-acetyl-beta-D-glucosaminyl-(1-&gt;6)]-N-acetyl-alpha-D-galactosaminyl}-L-seryl-[protein] + UDP + H(+). The enzyme catalyses a 3-O-[beta-D-galactosyl-(1-&gt;3)-N-acetyl-alpha-D-galactosaminyl]-L-threonyl-[protein] + UDP-N-acetyl-alpha-D-glucosamine = a 3-O-{beta-D-galactosyl-(1-&gt;3)-[N-acetyl-beta-D-glucosaminyl-(1-&gt;6)]-N-acetyl-alpha-D-galactosaminyl}-L-threonyl-[protein] + UDP + H(+). It carries out the reaction a beta-D-Gal-(1-&gt;4)-beta-D-GlcNAc-(1-&gt;3)-beta-D-Gal-(1-&gt;4)-beta-D-GlcNAc derivative + UDP-N-acetyl-alpha-D-glucosamine = a beta-D-Gal-(1-&gt;4)-beta-D-GlcNAc-(1-&gt;3)-[beta-D-GlcNAc-(1-&gt;6)]-beta-D-Gal-(1-&gt;4)-N-acetyl-beta-D-glucosaminyl derivative + UDP + H(+). The catalysed reaction is 3-O-[N-acetyl-beta-D-glucosaminyl-(1-&gt;3)-N-acetyl-alpha-D-galactosaminyl]-L-seryl-[protein] + UDP-N-acetyl-alpha-D-glucosamine = 3-O-[N-acetyl-beta-D-glucosaminyl-(1-&gt;3)-[N-acetyl-beta-D-glucosaminyl-(1-&gt;6)]-N-acetyl-alpha-D-galactosaminyl]-L-seryl-[protein] + UDP + H(+). It catalyses the reaction a 3-O-[N-acetyl-beta-D-glucosaminyl-(1-&gt;3)-N-acetyl-alpha-D-galactosaminyl]-L-threonyl-[protein] + UDP-N-acetyl-alpha-D-glucosamine = 3-O-[N-acetyl-beta-D-glucosaminyl-(1-&gt;3)-[N-acetyl-beta-D-glucosaminyl-(1-&gt;6)]-N-acetyl-alpha-D-galactosaminyl]-L-threonyl-[protein] + UDP + H(+). The protein operates within protein modification; protein glycosylation. In terms of biological role, non-essential glycosyltransferase that can synthesize all known mucin beta 6 N-acetylglucosaminides. Mediates core 2 and core 4 O-glycan branching, 2 important steps in mucin-type biosynthesis. Has also I-branching enzyme activity by converting linear into branched poly-N-acetyllactosaminoglycans. Contributes to the post-translational modifications of structural proteins. This chain is Beta-1,3-galactosyl-O-glycosyl-glycoprotein beta-1,6-N-acetylglucosaminyltransferase (Bo17), found in Bovine herpesvirus 4 (strain V. test) (BoHV-4).